Here is a 307-residue protein sequence, read N- to C-terminus: Protein FAM76A (307 aa).

Disordered regions lie at residues 142-195 (QRKH…ESIT) and 287-307 (KQAA…ITSP). The span at 161-182 (SRLSGGSHYNSQKTLSTSSIQN) shows a compositional bias: polar residues. Residues 217–299 (IIAQLKEEVA…AALSKSKKSE (83 aa)) are a coiled coil.

The protein belongs to the FAM76 family.

This is Protein FAM76A (FAM76A) from Bos taurus (Bovine).